A 358-amino-acid chain; its full sequence is Uroporphyrinogen decarboxylase (358 aa).

Residues Arg-29 to Arg-33, Phe-48, Asp-79, Tyr-155, Ser-210, and His-330 each bind substrate.

Belongs to the uroporphyrinogen decarboxylase family. Homodimer.

The protein resides in the cytoplasm. The enzyme catalyses uroporphyrinogen III + 4 H(+) = coproporphyrinogen III + 4 CO2. It functions in the pathway porphyrin-containing compound metabolism; protoporphyrin-IX biosynthesis; coproporphyrinogen-III from 5-aminolevulinate: step 4/4. Its function is as follows. Catalyzes the decarboxylation of four acetate groups of uroporphyrinogen-III to yield coproporphyrinogen-III. The protein is Uroporphyrinogen decarboxylase of Bordetella bronchiseptica (strain ATCC BAA-588 / NCTC 13252 / RB50) (Alcaligenes bronchisepticus).